The primary structure comprises 632 residues: Phosphomethylpyrimidine synthase (632 aa).

The span at M1–A13 shows a compositional bias: polar residues. The disordered stretch occupies residues M1–F26. Residues N221, M250, Y279, H315, S335–G337, D376–R379, and E415 contribute to the substrate site. H419 is a Zn(2+) binding site. Residue Y442 coordinates substrate. Position 483 (H483) interacts with Zn(2+). [4Fe-4S] cluster contacts are provided by C563, C566, and C571.

The protein belongs to the ThiC family. Homodimer. It depends on [4Fe-4S] cluster as a cofactor.

The enzyme catalyses 5-amino-1-(5-phospho-beta-D-ribosyl)imidazole + S-adenosyl-L-methionine = 4-amino-2-methyl-5-(phosphooxymethyl)pyrimidine + CO + 5'-deoxyadenosine + formate + L-methionine + 3 H(+). It functions in the pathway cofactor biosynthesis; thiamine diphosphate biosynthesis. Its function is as follows. Catalyzes the synthesis of the hydroxymethylpyrimidine phosphate (HMP-P) moiety of thiamine from aminoimidazole ribotide (AIR) in a radical S-adenosyl-L-methionine (SAM)-dependent reaction. The polypeptide is Phosphomethylpyrimidine synthase (Afipia carboxidovorans (strain ATCC 49405 / DSM 1227 / KCTC 32145 / OM5) (Oligotropha carboxidovorans)).